The following is a 219-amino-acid chain: Probable GTP-binding protein EngB (219 aa).

One can recognise an EngB-type G domain in the interval 24–207 (VQPEIAFAGR…HELIESWVRP (184 aa)). GTP-binding positions include 32–39 (GRSNAGKS), 59–63 (GRTQH), 81–84 (DLPG), 148–151 (TKCD), and 186–188 (FSA). Residues S39 and T61 each coordinate Mg(2+).

It belongs to the TRAFAC class TrmE-Era-EngA-EngB-Septin-like GTPase superfamily. EngB GTPase family. Mg(2+) is required as a cofactor.

Necessary for normal cell division and for the maintenance of normal septation. The sequence is that of Probable GTP-binding protein EngB from Burkholderia ambifaria (strain MC40-6).